A 421-amino-acid chain; its full sequence is CinA-like protein (421 aa).

Belongs to the CinA family.

The protein is CinA-like protein of Mycobacterium sp. (strain JLS).